The sequence spans 475 residues: uncharacterized protein (475 aa).

The helical transmembrane segment at L19–A39 threads the bilayer.

It is found in the membrane. This is an uncharacterized protein from Mycoplasma pneumoniae (strain ATCC 29342 / M129 / Subtype 1) (Mycoplasmoides pneumoniae).